A 549-amino-acid chain; its full sequence is MTDTNWKQNLNLPPKDTRPQTEDVLNTKGKSFEDFNLKRELLMGIFEAGFEKPSPIQEESIPMALAGRDILARAKNGTGKTASFIIPCLQLVKPKLNKVQALILVPTRELALQTSQVVRTLGKHVGTQCMVTTGGTSLRDDIVRLHDPVHILVGTPGRVLDLAARKVVDLSECPLFVMDEADKMLSREFKGIIEQILEFFPPNRQALLFSATFPLAVKSFMDKHLTKPYEINLMDELTLKGISQFYAFVEEKQKLHCLNTLFSKLQINQSIIFCNSTNRVELLAKKITELGYSCYYSHAKMPQQARNKVFHEFRQGKVRNLVCSDLLTRGIDIQAVNVVINFDFPKTAETYLHRIGRSGRFGHLGLAINLMSWNDRYSLYKIEQELGTEIKPIPATIDKSLYVAENADAVPRPFRIDELPKGNETVHNKGYQYKGQPVKDENSGSSSQQQQQPPPQQQQQQSTSPPQQQPQQQQQQPNPQHQFAPHPNGQFPPYPQQFHQPGAIPPQQFNGYPPYPQYPPQFAGYPGQPPQLPQGQQQHAQAQNPAQQY.

Residues 1 to 11 (MTDTNWKQNLN) show a composition bias toward polar residues. The segment at 1–24 (MTDTNWKQNLNLPPKDTRPQTEDV) is disordered. The Q motif motif lies at 30–58 (KSFEDFNLKRELLMGIFEAGFEKPSPIQE). The region spanning 61–231 (IPMALAGRDI…DKHLTKPYEI (171 aa)) is the Helicase ATP-binding domain. An ATP-binding site is contributed by 74 to 81 (AKNGTGKT). The DEAD box signature appears at 179-182 (DEAD). The Helicase C-terminal domain maps to 241–401 (GISQFYAFVE…PIPATIDKSL (161 aa)). A compositionally biased stretch (basic and acidic residues) spans 414-427 (FRIDELPKGNETVH). The disordered stretch occupies residues 414–549 (FRIDELPKGN…AQAQNPAQQY (136 aa)). 3 stretches are compositionally biased toward low complexity: residues 445–482 (SSSQ…PQHQ), 496–512 (QQFH…FNGY), and 533–549 (PQGQ…AQQY).

The protein belongs to the DEAD box helicase family. DDX6/DHH1 subfamily.

It localises to the cytoplasm. The protein localises to the P-body. The enzyme catalyses ATP + H2O = ADP + phosphate + H(+). In terms of biological role, ATP-dependent RNA helicase involved in mRNA turnover, and more specifically in mRNA decapping. Is involved in G1/S DNA-damage checkpoint recovery, probably through the regulation of the translational status of a subset of mRNAs. May also have a role in translation and mRNA nuclear export. The protein is ATP-dependent RNA helicase DHH1 (DHH1) of Candida albicans (strain SC5314 / ATCC MYA-2876) (Yeast).